The primary structure comprises 203 residues: Cytochrome c oxidase assembly protein CtaG (203 aa).

Over 1 to 19 (MDAGKAERRAGNGRRTDGR) the chain is Cytoplasmic. Residues 20 to 42 (RHLVVAAACAAFIAAMVGVTYAS) form a helical; Signal-anchor for type II membrane protein membrane-spanning segment. The Periplasmic portion of the chain corresponds to 43-203 (VPLYAMFCAL…AAARASGTGG (161 aa)).

Belongs to the COX11/CtaG family.

Its subcellular location is the cell inner membrane. Exerts its effect at some terminal stage of cytochrome c oxidase synthesis, probably by being involved in the insertion of the copper B into subunit I. The polypeptide is Cytochrome c oxidase assembly protein CtaG (Xanthobacter autotrophicus (strain ATCC BAA-1158 / Py2)).